A 366-amino-acid polypeptide reads, in one-letter code: tRNA/tmRNA (uracil-C(5))-methyltransferase (366 aa).

Positions 189, 217, 222, 238, and 298 each coordinate S-adenosyl-L-methionine. Residue C323 is the Nucleophile of the active site. The active-site Proton acceptor is E357.

The protein belongs to the class I-like SAM-binding methyltransferase superfamily. RNA M5U methyltransferase family. TrmA subfamily.

It catalyses the reaction uridine(54) in tRNA + S-adenosyl-L-methionine = 5-methyluridine(54) in tRNA + S-adenosyl-L-homocysteine + H(+). The enzyme catalyses uridine(341) in tmRNA + S-adenosyl-L-methionine = 5-methyluridine(341) in tmRNA + S-adenosyl-L-homocysteine + H(+). Its function is as follows. Dual-specificity methyltransferase that catalyzes the formation of 5-methyluridine at position 54 (m5U54) in all tRNAs, and that of position 341 (m5U341) in tmRNA (transfer-mRNA). This Idiomarina loihiensis (strain ATCC BAA-735 / DSM 15497 / L2-TR) protein is tRNA/tmRNA (uracil-C(5))-methyltransferase.